A 772-amino-acid chain; its full sequence is Mitochondrial intermediate peptidase (772 aa).

The N-terminal 33 residues, 1 to 33 (MLARPSTTVLARRPFFRFRGCLNEPRPTKARCL), are a transit peptide targeting the mitochondrion. His556 contributes to the Zn(2+) binding site. Residue Glu557 is part of the active site. The Zn(2+) site is built by His560 and His563.

The protein belongs to the peptidase M3 family. Zn(2+) serves as cofactor.

Its subcellular location is the mitochondrion matrix. The enzyme catalyses Release of an N-terminal octapeptide as second stage of processing of some proteins imported into the mitochondrion.. Cleaves proteins, imported into the mitochondrion, to their mature size. While most mitochondrial precursor proteins are processed to the mature form in one step by mitochondrial processing peptidase (MPP), the sequential cleavage by MIP of an octapeptide after initial processing by MPP is a required step for a subgroup of nuclear-encoded precursor proteins destined for the matrix or the inner membrane. In Coprinopsis scobicola (Ink cap fungus), this protein is Mitochondrial intermediate peptidase (OCT1).